A 477-amino-acid chain; its full sequence is Glycogen synthase (477 aa).

ADP-alpha-D-glucose is bound at residue lysine 15.

Belongs to the glycosyltransferase 1 family. Bacterial/plant glycogen synthase subfamily.

It catalyses the reaction [(1-&gt;4)-alpha-D-glucosyl](n) + ADP-alpha-D-glucose = [(1-&gt;4)-alpha-D-glucosyl](n+1) + ADP + H(+). It participates in glycan biosynthesis; glycogen biosynthesis. Functionally, synthesizes alpha-1,4-glucan chains using ADP-glucose. The chain is Glycogen synthase from Streptococcus pneumoniae (strain 70585).